Here is a 565-residue protein sequence, read N- to C-terminus: Effector protease OspD3 (565 aa).

The protein belongs to the Toxin_15 family.

It is found in the secreted. Effector protease that disrupts necroptosis in host cells by mediating proteolytic cleavage of host RIPK1 and RIPK3. The polypeptide is Effector protease OspD3 (Shigella flexneri).